Here is a 233-residue protein sequence, read N- to C-terminus: Phosphoglycolate phosphatase (233 aa).

Asp-9 (nucleophile) is an active-site residue. Residues Asp-9 and Asp-11 each coordinate Mg(2+). Substrate is bound at residue Lys-154. Mg(2+) contacts are provided by Asp-177 and Asp-181.

The protein belongs to the archaeal SPP-like hydrolase family. The cofactor is Mg(2+).

It catalyses the reaction 2-phosphoglycolate + H2O = glycolate + phosphate. Functionally, catalyzes the dephosphorylation of 2-phosphoglycolate. This chain is Phosphoglycolate phosphatase, found in Pyrococcus abyssi (strain GE5 / Orsay).